The primary structure comprises 157 residues: Putative pre-16S rRNA nuclease (157 aa).

The protein belongs to the YqgF nuclease family.

The protein localises to the cytoplasm. Functionally, could be a nuclease involved in processing of the 5'-end of pre-16S rRNA. The protein is Putative pre-16S rRNA nuclease of Ruegeria sp. (strain TM1040) (Silicibacter sp.).